The sequence spans 267 residues: Undecaprenyl-diphosphatase (267 aa).

Helical transmembrane passes span 1–21, 40–60, 85–105, 112–132, 188–208, 219–239, and 245–265; these read MPLLQLILVALIQGVTEFLPV, GQAIDVAVHVGTLAAVVLFFW, LALGLIVATIPTVIFGTFLYF, LRSVAVIGWTMLVFGVVLYIA, IAMLMSIPTIIASGVLLGTEV, DMGIAALLAMASALAALALMM, and VSFTPYVIYRVALGMVLLFIA.

This sequence belongs to the UppP family.

The protein resides in the cell inner membrane. It catalyses the reaction di-trans,octa-cis-undecaprenyl diphosphate + H2O = di-trans,octa-cis-undecaprenyl phosphate + phosphate + H(+). Catalyzes the dephosphorylation of undecaprenyl diphosphate (UPP). Confers resistance to bacitracin. This chain is Undecaprenyl-diphosphatase, found in Ruegeria sp. (strain TM1040) (Silicibacter sp.).